The sequence spans 899 residues: Bifunctional uridylyltransferase/uridylyl-removing enzyme (899 aa).

The uridylyltransferase stretch occupies residues 1–342 (MPQVDPDLFD…PGDAAGRVEP (342 aa)). The interval 343–705 (LNERFQVRDG…TTQREFEGAT (363 aa)) is uridylyl-removing. The HD domain maps to 461 to 583 (VDAHTLNLIK…VRDQTYLDYL (123 aa)). ACT domains are found at residues 706–789 (QIFI…IIQR) and 816–899 (ILEI…RISI).

It belongs to the GlnD family. Mg(2+) serves as cofactor.

It carries out the reaction [protein-PII]-L-tyrosine + UTP = [protein-PII]-uridylyl-L-tyrosine + diphosphate. It catalyses the reaction [protein-PII]-uridylyl-L-tyrosine + H2O = [protein-PII]-L-tyrosine + UMP + H(+). Its activity is regulated as follows. Uridylyltransferase (UTase) activity is inhibited by glutamine, while glutamine activates uridylyl-removing (UR) activity. Modifies, by uridylylation and deuridylylation, the PII regulatory proteins (GlnB and homologs), in response to the nitrogen status of the cell that GlnD senses through the glutamine level. Under low glutamine levels, catalyzes the conversion of the PII proteins and UTP to PII-UMP and PPi, while under higher glutamine levels, GlnD hydrolyzes PII-UMP to PII and UMP (deuridylylation). Thus, controls uridylylation state and activity of the PII proteins, and plays an important role in the regulation of nitrogen fixation and metabolism. The protein is Bifunctional uridylyltransferase/uridylyl-removing enzyme of Azotobacter vinelandii (strain DJ / ATCC BAA-1303).